A 188-amino-acid chain; its full sequence is ATP synthase subunit delta (188 aa).

This sequence belongs to the ATPase delta chain family. F-type ATPases have 2 components, F(1) - the catalytic core - and F(0) - the membrane proton channel. F(1) has five subunits: alpha(3), beta(3), gamma(1), delta(1), epsilon(1). F(0) has three main subunits: a(1), b(2) and c(10-14). The alpha and beta chains form an alternating ring which encloses part of the gamma chain. F(1) is attached to F(0) by a central stalk formed by the gamma and epsilon chains, while a peripheral stalk is formed by the delta and b chains.

The protein resides in the cell inner membrane. F(1)F(0) ATP synthase produces ATP from ADP in the presence of a proton or sodium gradient. F-type ATPases consist of two structural domains, F(1) containing the extramembraneous catalytic core and F(0) containing the membrane proton channel, linked together by a central stalk and a peripheral stalk. During catalysis, ATP synthesis in the catalytic domain of F(1) is coupled via a rotary mechanism of the central stalk subunits to proton translocation. Functionally, this protein is part of the stalk that links CF(0) to CF(1). It either transmits conformational changes from CF(0) to CF(1) or is implicated in proton conduction. The sequence is that of ATP synthase subunit delta from Rhizobium johnstonii (strain DSM 114642 / LMG 32736 / 3841) (Rhizobium leguminosarum bv. viciae).